A 153-amino-acid chain; its full sequence is UPF0540 protein At1g62220 (153 aa).

The signal sequence occupies residues 1 to 21 (MNATKFVVLLVISVLCAIVTA). Disordered regions lie at residues 63–82 (SSAT…YENG) and 122–153 (ARAN…GKKD). The span at 122–132 (ARANGKVASAS) shows a compositional bias: low complexity. Residues 141-153 (KKGKGKKGKGKKD) are compositionally biased toward basic residues.

Belongs to the UPF0540 family.

This chain is UPF0540 protein At1g62220, found in Arabidopsis thaliana (Mouse-ear cress).